The following is a 413-amino-acid chain: Arginine biosynthesis bifunctional protein ArgJ (413 aa).

Substrate-binding residues include Thr-158, Lys-184, Thr-195, Glu-285, Asn-408, and Ser-413. Thr-195 (nucleophile) is an active-site residue.

The protein belongs to the ArgJ family. Heterotetramer of two alpha and two beta chains.

Its subcellular location is the cytoplasm. It catalyses the reaction N(2)-acetyl-L-ornithine + L-glutamate = N-acetyl-L-glutamate + L-ornithine. The enzyme catalyses L-glutamate + acetyl-CoA = N-acetyl-L-glutamate + CoA + H(+). It participates in amino-acid biosynthesis; L-arginine biosynthesis; L-ornithine and N-acetyl-L-glutamate from L-glutamate and N(2)-acetyl-L-ornithine (cyclic): step 1/1. The protein operates within amino-acid biosynthesis; L-arginine biosynthesis; N(2)-acetyl-L-ornithine from L-glutamate: step 1/4. Functionally, catalyzes two activities which are involved in the cyclic version of arginine biosynthesis: the synthesis of N-acetylglutamate from glutamate and acetyl-CoA as the acetyl donor, and of ornithine by transacetylation between N(2)-acetylornithine and glutamate. The polypeptide is Arginine biosynthesis bifunctional protein ArgJ (Bradyrhizobium diazoefficiens (strain JCM 10833 / BCRC 13528 / IAM 13628 / NBRC 14792 / USDA 110)).